An 816-amino-acid chain; its full sequence is Protein kinase C-binding protein NELL2 (816 aa).

A signal peptide spans 1–21 (MESRVLLRTFCLIFGLGAVWG). 4 N-linked (GlcNAc...) asparagine glycosylation sites follow: N53, N225, N293, and N298. Residues 64–228 (PRSIKASTAT…AQCPDLNRTC (165 aa)) form the Laminin G-like domain. The VWFC 1 domain occupies 272-331 (RTCTMKGTTYREFESWIDGCKNCTCLNGTIQCETLICPNPDCPLKSALAYVDGKCCKECK). An EGF-like 1 domain is found at 397-439 (GYDFCSERHNCMENSICRNLNDRAVCSCRDGFRALREDNAYCE). Cystine bridges form between C401/C413, C407/C422, and C424/C438. Residues D440, I441, and E443 each contribute to the Ca(2+) site. The EGF-like 2; calcium-binding domain occupies 440 to 481 (DIDECAEGRHYCRENTMCVNTPGSFMCICKTGYIRIDDYSCT). Intrachain disulfides connect C444–C457, C451–C466, C468–C480, C486–C499, C493–C508, C510–C521, C525–C535, C529–C541, and C543–C552. 3 residues coordinate Ca(2+): N459, T460, and S463. Residues 482 to 522 (EHDECITNQHNCDENALCFNTVGGHNCVCKPGYTGNGTTCK) form the EGF-like 3; calcium-binding domain. N-linked (GlcNAc...) asparagine glycosylation is present at N517. Residues 523–553 (AFCKDGCRNGGACIAANVCACPQGFTGPSCE) form the EGF-like 4 domain. The O-linked (GlcNAc...) threonine glycan is linked to T548. D555, I556, and E558 together coordinate Ca(2+). The region spanning 555 to 601 (DIDECSDGFVQCDSRANCINLPGWYHCECRDGYHDNGMFSPSGESCE) is the EGF-like 5; calcium-binding domain. Disulfide bonds link C559–C572, C566–C581, and C583–C600. The Ca(2+) site is built by N574, L575, and W578. Ca(2+) contacts are provided by D602, I603, and E605. The EGF-like 6; calcium-binding domain occupies 602-637 (DIDECGTGRHSCANDTICFNLDGGYDCRCPHGKNCT). Intrachain disulfides connect C606-C619, C613-C628, and C630-C636. An N-linked (GlcNAc...) asparagine glycan is attached at N615. 3 residues coordinate Ca(2+): N621, L622, and G625. An N-linked (GlcNAc...) asparagine glycan is attached at N635. 2 consecutive VWFC domains span residues 638–693 (GDCI…PECD) and 698–756 (SQCL…PRCV).

Homotrimer. Binds to PRKCB. Interacts with NICOL1; this interaction triggers epididymal differentiation. Interacts (via the EGF domains) with ROBO3 (via Fibronectin type-III 1 domain) with a 3:3 stoichiometry; this interaction promotes oligomerization of ROBO3 resulting in the repulsion of commissural axons in the midline.

It is found in the secreted. Functionally, plays multiple roles in neural tissues, regulates neuronal proliferation, survival, differentiation, polarization, as well as axon guidance and synaptic functions. Plays an important role in axon development during neuronal differentiation through the MAPK intracellular signaling pathway. Via binding to its receptor ROBO3, plays a role in axon guidance, functioning as a repulsive axon guidance cue that contributes to commissural axon guidance to the midline. Required for neuron survival through the modulation of MAPK signaling pathways too. Involved in the regulation of hypothalamic GNRH secretion and the control of puberty. In terms of biological role, epididymal-secreted protein that signals through a ROS1-pathway to regulate the epididymal initial segment (IS) maturation, sperm maturation and male fertility. This is Protein kinase C-binding protein NELL2 from Homo sapiens (Human).